Here is a 358-residue protein sequence, read N- to C-terminus: Chorismate synthase (358 aa).

Residue R47 participates in NADP(+) binding. FMN-binding positions include 124–126 (RSS), 240–241 (NA), G284, 299–303 (KPVAT), and R325.

This sequence belongs to the chorismate synthase family. In terms of assembly, homotetramer. The cofactor is FMNH2.

It carries out the reaction 5-O-(1-carboxyvinyl)-3-phosphoshikimate = chorismate + phosphate. Its pathway is metabolic intermediate biosynthesis; chorismate biosynthesis; chorismate from D-erythrose 4-phosphate and phosphoenolpyruvate: step 7/7. Functionally, catalyzes the anti-1,4-elimination of the C-3 phosphate and the C-6 proR hydrogen from 5-enolpyruvylshikimate-3-phosphate (EPSP) to yield chorismate, which is the branch point compound that serves as the starting substrate for the three terminal pathways of aromatic amino acid biosynthesis. This reaction introduces a second double bond into the aromatic ring system. In Bacteroides fragilis (strain YCH46), this protein is Chorismate synthase.